A 662-amino-acid polypeptide reads, in one-letter code: Chaperone protein dnaK1 (662 aa).

Thr-198 carries the post-translational modification Phosphothreonine; by autocatalysis. A disordered region spans residues 630–662; sequence DWDDDPWAAPSGPPRGRSLNRRDRDPWDDDFYR. A compositionally biased stretch (basic and acidic residues) spans 649–662; the sequence is NRRDRDPWDDDFYR.

It belongs to the heat shock protein 70 family.

Acts as a chaperone. This chain is Chaperone protein dnaK1 (dnaK1), found in Parasynechococcus marenigrum (strain WH8102).